The primary structure comprises 116 residues: Endocuticle structural glycoprotein ABD-4 (116 aa).

The residue at position 1 (Gln-1) is a Pyrrolidone carboxylic acid. The Chitin-binding type R&amp;R domain maps to 20–92; that stretch reads DGSYQWNYET…PQGAHFPTPP (73 aa). The tract at residues 78–97 is disordered; sequence ENGFVPQGAHFPTPPPIPPA. A glycan (O-linked (GalNAc) threonine; in ADB-4A, ABD-4B and ABD-4C) is linked at Thr-90. O-linked (GalNAc) threonine; in ADB-4A and ABD-4B glycosylation is present at Thr-107. O-linked (GalNAc) threonine; in ADB-4A glycosylation occurs at Thr-111. Pro-116 carries the post-translational modification Proline amide.

Post-translationally, 3 variants exists that arise from a sequential glycosylation with N-acetylgalactosamine at three (ABD-4A), two (ABD-4B) or one (ABD-4C) threonine residues.

Its function is as follows. Component of the soft endocuticle of migratory locust. This is Endocuticle structural glycoprotein ABD-4 from Locusta migratoria (Migratory locust).